The following is an 84-amino-acid chain: Kappa-conotoxin-like Im11.3 (84 aa).

Positions 1–26 (MMFRLTSVSCFLLVIACLNLFQVVLT) are cleaved as a signal peptide. Disulfide bonds link C29/C43, C36/C48, C42/C51, and C47/C64. Residues 71–84 (LRPSHPLFLLLPAR) constitute a propeptide that is removed on maturation.

The protein belongs to the conotoxin I2 superfamily. As to expression, expressed by the venom duct.

Its subcellular location is the secreted. Its function is as follows. Inhibits the vertebrate voltage-gated potassium channels Kv1.1/KCNA1 and Kv1.3/KCNA3. The polypeptide is Kappa-conotoxin-like Im11.3 (Conus imperialis (Imperial cone)).